A 231-amino-acid polypeptide reads, in one-letter code: Small ribosomal subunit protein uS3 (231 aa).

One can recognise a KH type-2 domain in the interval 17–86; it reads VEKYLTKELK…SPQIEVQQVQ (70 aa).

It belongs to the universal ribosomal protein uS3 family. In terms of assembly, part of the 30S ribosomal subunit.

Binds the lower part of the 30S subunit head. The protein is Small ribosomal subunit protein uS3 of Methanoregula boonei (strain DSM 21154 / JCM 14090 / 6A8).